The chain runs to 392 residues: GDP-mannose transporter (392 aa).

Residues Met-1–Ala-40 form a disordered region. At Met-1–Gly-55 the chain is on the cytoplasmic side. The span at Arg-29–Gln-38 shows a compositional bias: polar residues. Residues Ala-56–Val-76 traverse the membrane as a helical segment. At Ser-77–Glu-80 the chain is on the lumenal side. A helical membrane pass occupies residues Trp-81 to Ile-101. The Cytoplasmic segment spans residues Cys-102–Lys-121. A helical transmembrane segment spans residues Trp-122–Ser-144. At Val-145–Thr-149 the chain is on the lumenal side. A helical membrane pass occupies residues Ile-150–Gly-168. The Cytoplasmic portion of the chain corresponds to Gly-169–Met-174. Residues Ala-175 to Val-198 traverse the membrane as a helical segment. The Lumenal segment spans residues Glu-199–Thr-213. A helical transmembrane segment spans residues Leu-214 to Gly-234. The Cytoplasmic segment spans residues Met-235 to Asp-248. The chain crosses the membrane as a helical span at residues Thr-249 to Glu-269. At Asp-270 to Ser-287 the chain is on the lumenal side. The helical transmembrane segment at Leu-288 to Trp-308 threads the bilayer. At Cys-309–Thr-316 the chain is on the cytoplasmic side. Residues Thr-317–Phe-337 form a helical membrane-spanning segment. The Lumenal portion of the chain corresponds to Asp-338 to Thr-342. A helical transmembrane segment spans residues Phe-343–Trp-361. Topologically, residues Ser-362–Ala-392 are cytoplasmic.

The protein belongs to the TPT transporter family. SLC35D subfamily. Homooligomer.

Its subcellular location is the golgi apparatus membrane. It is found in the cytoplasmic vesicle membrane. The protein localises to the endoplasmic reticulum membrane. In terms of biological role, involved in the import of GDP-mannose from the cytoplasm into the Golgi lumen. This is GDP-mannose transporter (vrg-4) from Neurospora crassa (strain ATCC 24698 / 74-OR23-1A / CBS 708.71 / DSM 1257 / FGSC 987).